Here is a 257-residue protein sequence, read N- to C-terminus: tRNA (guanine-N(7)-)-methyltransferase (257 aa).

Residues 1-42 (MTVVVSDHQNPRPPGDDAAPLGRTGNRDRPPGSFFGRRKGHR) form a disordered region. Glu84, Glu109, Asp136, and Asp158 together coordinate S-adenosyl-L-methionine. Asp158 is a catalytic residue. Residues Lys162 and Asp194 each contribute to the substrate site.

This sequence belongs to the class I-like SAM-binding methyltransferase superfamily. TrmB family.

The catalysed reaction is guanosine(46) in tRNA + S-adenosyl-L-methionine = N(7)-methylguanosine(46) in tRNA + S-adenosyl-L-homocysteine. It functions in the pathway tRNA modification; N(7)-methylguanine-tRNA biosynthesis. Functionally, catalyzes the formation of N(7)-methylguanine at position 46 (m7G46) in tRNA. In Nitrobacter winogradskyi (strain ATCC 25391 / DSM 10237 / CIP 104748 / NCIMB 11846 / Nb-255), this protein is tRNA (guanine-N(7)-)-methyltransferase.